The following is a 406-amino-acid chain: Argininosuccinate synthase (406 aa).

8 to 16 (AYSGGLDTS) is a binding site for ATP. L-citrulline is bound at residue Tyr-86. Gly-116 lines the ATP pocket. L-aspartate-binding residues include Thr-118, Asn-122, and Asp-123. Asn-122 contacts L-citrulline. Positions 126, 174, 183, 259, and 271 each coordinate L-citrulline.

This sequence belongs to the argininosuccinate synthase family. Type 1 subfamily. As to quaternary structure, homotetramer.

It localises to the cytoplasm. It catalyses the reaction L-citrulline + L-aspartate + ATP = 2-(N(omega)-L-arginino)succinate + AMP + diphosphate + H(+). It functions in the pathway amino-acid biosynthesis; L-arginine biosynthesis; L-arginine from L-ornithine and carbamoyl phosphate: step 2/3. This Dehalococcoides mccartyi (strain ATCC BAA-2100 / JCM 16839 / KCTC 5957 / BAV1) protein is Argininosuccinate synthase.